The primary structure comprises 106 residues: ATP synthase-coupling factor 6, mitochondrial (106 aa).

It belongs to the eukaryotic ATPase subunit F6 family. As to quaternary structure, F-type ATPases have 2 components, CF(1) - the catalytic core - and CF(0) - the membrane proton channel. CF(0) seems to have nine subunits: a, b, c, d, e, f, g, F6 and 8 (or A6L).

It is found in the mitochondrion. The protein resides in the mitochondrion inner membrane. In terms of biological role, mitochondrial membrane ATP synthase (F(1)F(0) ATP synthase or Complex V) produces ATP from ADP in the presence of a proton gradient across the membrane which is generated by electron transport complexes of the respiratory chain. F-type ATPases consist of two structural domains, F(1) - containing the extramembraneous catalytic core and F(0) - containing the membrane proton channel, linked together by a central stalk and a peripheral stalk. During catalysis, ATP synthesis in the catalytic domain of F(1) is coupled via a rotary mechanism of the central stalk subunits to proton translocation. Part of the complex F(0) domain and the peripheric stalk, which acts as a stator to hold the catalytic alpha(3)beta(3) subcomplex and subunit a/ATP6 static relative to the rotary elements. The protein is ATP synthase-coupling factor 6, mitochondrial of Drosophila melanogaster (Fruit fly).